A 570-amino-acid polypeptide reads, in one-letter code: Transmembrane 7 superfamily member 3 (570 aa).

Positions 1-21 are cleaved as a signal peptide; sequence MGFLQLLVVAVLASEHRVAGA. Asn27, Asn61, Asn75, Asn87, and Asn264 each carry an N-linked (GlcNAc...) asparagine glycan. 7 helical membrane passes run 296 to 313, 320 to 342, 347 to 369, 371 to 393, 408 to 430, 437 to 459, and 479 to 501; these read VFFTLFALLGFFICFFGH, LFFIGFIIMGFFFYILITRLTPI, NLILTAVTGSVGGMFLVAVWWRF, ILSICMLCVGLVLGFLISSVTFF, FWVTFSCIAILIPVVFMGCLRIL, VIGSYSVVLAIDSYWSTSLSYIT, and PFQTNDFIILAVWGMLAVSGITL.

In terms of tissue distribution, widely expressed. Highly expressed in kidney and pancreas.

It localises to the cell membrane. Its function is as follows. Involved in the inhibition of cytokine-induced death of pancreatic beta cells. Involved in the promotion of insulin secretion from pancreatic beta cells. Is a downstream transcriptional target of p53/TP53, and acts as a pro-survival homeostatic factor that attenuates the development of cellular stress. Maintains protein homeostasis and promotes cell survival through attenuation of endoplasmic reticulum (ER) stress and the subsequent induction of unfolded protein response (UPR). The polypeptide is Transmembrane 7 superfamily member 3 (TM7SF3) (Homo sapiens (Human)).